A 436-amino-acid polypeptide reads, in one-letter code: UPF0597 protein YhaM (436 aa).

Belongs to the UPF0597 family.

The polypeptide is UPF0597 protein YhaM (Shigella boydii serotype 18 (strain CDC 3083-94 / BS512)).